Consider the following 156-residue polypeptide: Small ribosomal subunit protein uS7 (156 aa).

This sequence belongs to the universal ribosomal protein uS7 family. In terms of assembly, part of the 30S ribosomal subunit. Contacts proteins S9 and S11.

Its function is as follows. One of the primary rRNA binding proteins, it binds directly to 16S rRNA where it nucleates assembly of the head domain of the 30S subunit. Is located at the subunit interface close to the decoding center, probably blocks exit of the E-site tRNA. This chain is Small ribosomal subunit protein uS7, found in Aeromonas hydrophila subsp. hydrophila (strain ATCC 7966 / DSM 30187 / BCRC 13018 / CCUG 14551 / JCM 1027 / KCTC 2358 / NCIMB 9240 / NCTC 8049).